Consider the following 86-residue polypeptide: CLAVATA3/ESR (CLE)-related protein 8 (86 aa).

The signal sequence occupies residues 1–24 (MKVLKRDSMLLLITLYFLLTTSMA). The tract at residues 43 to 86 (DLKQNKAKPHLPNLFRTMRRVPTGPNPLHHISPPQPGSLNYARN) is disordered. Residues Pro-64 and Pro-67 each carry the hydroxyproline modification. A glycan (O-linked (Ara...) hydroxyproline) is linked at Pro-67.

It belongs to the CLV3/ESR signal peptide family. Post-translationally, the O-glycosylation (arabinosylation) of the hydroxyproline Pro-67 enhances binding affinity of the CLE8p peptide for its receptor. In terms of tissue distribution, mostly expressed in siliques, and, to a lower extent, in flowers. Expressed in young embryos and endosperm.

The protein resides in the secreted. It localises to the extracellular space. Extracellular signal peptide that regulates cell fate. Represses root apical meristem maintenance. Positively regulates the expression of the transcription factor WOX8 and thus, regulates early embryo development. Regulates the transition of protophloem cells from proliferation to differentiation, thus impinging on postembryonic growth capacity of the root meristem; this signaling pathway requires CRN and CLV2. This chain is CLAVATA3/ESR (CLE)-related protein 8, found in Arabidopsis thaliana (Mouse-ear cress).